A 178-amino-acid chain; its full sequence is FXYD domain-containing ion transport regulator 5 (178 aa).

An N-terminal signal peptide occupies residues 1–21; the sequence is MSPSGRLCLLTIVGLILPTRG. The Extracellular portion of the chain corresponds to 22–145; that stretch reads QTLKDTTSSS…FYDEHTLRKR (124 aa). Residues 23-131 are disordered; it reads TLKDTTSSSS…QTLKPSGFHE (109 aa). 2 stretches are compositionally biased toward low complexity: residues 26–36 and 68–77; these read DTTSSSSADST and TPQPQTQTQQ. Residues 103-125 are compositionally biased toward polar residues; the sequence is DTTTLSERPSPSTDVQTDPQTLK. The chain crosses the membrane as a helical span at residues 146–164; it reads GLLVAAVLFITGIIILTSG. Topologically, residues 165–178 are cytoplasmic; that stretch reads KCRQLSRLCRNRCR.

This sequence belongs to the FXYD family. Regulatory subunit of the sodium/potassium-transporting ATPase which is composed of a catalytic alpha subunit, a non-catalytic beta subunit and an additional regulatory subunit. The regulatory subunit, a member of the FXYD protein family, modulates the enzymatic activity in a tissue- and isoform-specific way by changing affinities of the Na+/K+-ATPase toward Na(+), K(+) or ATP. Glycosylated.

The protein localises to the cell membrane. Its subcellular location is the basolateral cell membrane. Associates with and regulates the activity of the sodium/potassium-transporting ATPase (NKA) which catalyzes the hydrolysis of ATP coupled with the exchange of Na(+) and K(+) ions across the plasma membrane. May increase NKA activity by increasing the apparent affinity for Na(+). Involved in down-regulation of E-cadherin which results in reduced cell adhesion. Promotes metastasis. The protein is FXYD domain-containing ion transport regulator 5 (FXYD5) of Homo sapiens (Human).